The primary structure comprises 353 residues: Photosystem II protein D1 (353 aa).

Thr2 bears the N-acetylthreonine mark. Residue Thr2 is modified to Phosphothreonine. 3 helical membrane passes run 29–46 (YIGW…TATS), 118–133 (HFFL…EWEL), and 142–156 (WIAV…AATA). Residue His118 coordinates chlorophyll a. Tyr126 contacts pheophytin a. [CaMn4O5] cluster contacts are provided by Asp170 and Glu189. Residues 197–218 (FHMLGVAGVFGGSLFSAMHGSL) traverse the membrane as a helical segment. His198 serves as a coordination point for chlorophyll a. A quinone is bound by residues His215 and 264–265 (SF). Fe cation is bound at residue His215. Residue His272 participates in Fe cation binding. Residues 274–288 (FLAAWPVVGIWFTAL) traverse the membrane as a helical segment. [CaMn4O5] cluster is bound by residues His332, Glu333, Asp342, and Ala344. Positions 345–353 (SVEAPSVNG) are excised as a propeptide.

It belongs to the reaction center PufL/M/PsbA/D family. PSII is composed of 1 copy each of membrane proteins PsbA, PsbB, PsbC, PsbD, PsbE, PsbF, PsbH, PsbI, PsbJ, PsbK, PsbL, PsbM, PsbT, PsbX, PsbY, PsbZ, Psb30/Ycf12, at least 3 peripheral proteins of the oxygen-evolving complex and a large number of cofactors. It forms dimeric complexes. The D1/D2 heterodimer binds P680, chlorophylls that are the primary electron donor of PSII, and subsequent electron acceptors. It shares a non-heme iron and each subunit binds pheophytin, quinone, additional chlorophylls, carotenoids and lipids. D1 provides most of the ligands for the Mn4-Ca-O5 cluster of the oxygen-evolving complex (OEC). There is also a Cl(-1) ion associated with D1 and D2, which is required for oxygen evolution. The PSII complex binds additional chlorophylls, carotenoids and specific lipids. is required as a cofactor. Tyr-161 forms a radical intermediate that is referred to as redox-active TyrZ, YZ or Y-Z. In terms of processing, C-terminally processed by CTPA; processing is essential to allow assembly of the oxygen-evolving complex and thus photosynthetic growth.

The protein localises to the plastid. Its subcellular location is the chloroplast thylakoid membrane. The enzyme catalyses 2 a plastoquinone + 4 hnu + 2 H2O = 2 a plastoquinol + O2. Its function is as follows. Photosystem II (PSII) is a light-driven water:plastoquinone oxidoreductase that uses light energy to abstract electrons from H(2)O, generating O(2) and a proton gradient subsequently used for ATP formation. It consists of a core antenna complex that captures photons, and an electron transfer chain that converts photonic excitation into a charge separation. The D1/D2 (PsbA/PsbD) reaction center heterodimer binds P680, the primary electron donor of PSII as well as several subsequent electron acceptors. This chain is Photosystem II protein D1, found in Chaetosphaeridium globosum (Charophycean green alga).